Reading from the N-terminus, the 474-residue chain is Proline--tRNA ligase (474 aa).

It belongs to the class-II aminoacyl-tRNA synthetase family. ProS type 3 subfamily. As to quaternary structure, homodimer.

Its subcellular location is the cytoplasm. The enzyme catalyses tRNA(Pro) + L-proline + ATP = L-prolyl-tRNA(Pro) + AMP + diphosphate. Its function is as follows. Catalyzes the attachment of proline to tRNA(Pro) in a two-step reaction: proline is first activated by ATP to form Pro-AMP and then transferred to the acceptor end of tRNA(Pro). The protein is Proline--tRNA ligase of Mycoplasma mycoides subsp. mycoides SC (strain CCUG 32753 / NCTC 10114 / PG1).